The primary structure comprises 145 residues: MRTTFMAKANEVERKWYVVDAEGQTLGRLSTEVASILRGKNKPTFTPHVDTGDHVIIINAEKIHLTGNKLNDKIYYRHTNHPGGLKQRTALEMRTNYPVQMLELAIKGMLPKGRLGRQVSKKLNVYAGAEHPHQAQKPEVYELRG.

This sequence belongs to the universal ribosomal protein uL13 family. In terms of assembly, part of the 50S ribosomal subunit.

In terms of biological role, this protein is one of the early assembly proteins of the 50S ribosomal subunit, although it is not seen to bind rRNA by itself. It is important during the early stages of 50S assembly. In Bacillus cereus (strain G9842), this protein is Large ribosomal subunit protein uL13.